A 133-amino-acid chain; its full sequence is S-adenosylmethionine decarboxylase proenzyme (133 aa).

Catalysis depends on serine 63, which acts as the Schiff-base intermediate with substrate; via pyruvic acid. Serine 63 is subject to Pyruvic acid (Ser); by autocatalysis. Histidine 68 acts as the Proton acceptor; for processing activity in catalysis. Cysteine 83 (proton donor; for catalytic activity) is an active-site residue.

Belongs to the prokaryotic AdoMetDC family. Type 1 subfamily. Heterotetramer of two alpha and two beta chains arranged as a dimer of alpha/beta heterodimers. It depends on pyruvate as a cofactor. Post-translationally, is synthesized initially as an inactive proenzyme. Formation of the active enzyme involves a self-maturation process in which the active site pyruvoyl group is generated from an internal serine residue via an autocatalytic post-translational modification. Two non-identical subunits are generated from the proenzyme in this reaction, and the pyruvate is formed at the N-terminus of the alpha chain, which is derived from the carboxyl end of the proenzyme. The post-translation cleavage follows an unusual pathway, termed non-hydrolytic serinolysis, in which the side chain hydroxyl group of the serine supplies its oxygen atom to form the C-terminus of the beta chain, while the remainder of the serine residue undergoes an oxidative deamination to produce ammonia and the pyruvoyl group blocking the N-terminus of the alpha chain.

The enzyme catalyses S-adenosyl-L-methionine + H(+) = S-adenosyl 3-(methylsulfanyl)propylamine + CO2. It participates in amine and polyamine biosynthesis; S-adenosylmethioninamine biosynthesis; S-adenosylmethioninamine from S-adenosyl-L-methionine: step 1/1. In terms of biological role, catalyzes the decarboxylation of S-adenosylmethionine to S-adenosylmethioninamine (dcAdoMet), the propylamine donor required for the synthesis of the polyamines spermine and spermidine from the diamine putrescine. This Acidithiobacillus ferrooxidans (strain ATCC 23270 / DSM 14882 / CIP 104768 / NCIMB 8455) (Ferrobacillus ferrooxidans (strain ATCC 23270)) protein is S-adenosylmethionine decarboxylase proenzyme.